Reading from the N-terminus, the 129-residue chain is Large ribosomal subunit protein uL22 (129 aa).

Belongs to the universal ribosomal protein uL22 family. In terms of assembly, part of the 50S ribosomal subunit.

This protein binds specifically to 23S rRNA; its binding is stimulated by other ribosomal proteins, e.g. L4, L17, and L20. It is important during the early stages of 50S assembly. It makes multiple contacts with different domains of the 23S rRNA in the assembled 50S subunit and ribosome. Its function is as follows. The globular domain of the protein is located near the polypeptide exit tunnel on the outside of the subunit, while an extended beta-hairpin is found that lines the wall of the exit tunnel in the center of the 70S ribosome. In Sinorhizobium medicae (strain WSM419) (Ensifer medicae), this protein is Large ribosomal subunit protein uL22.